We begin with the raw amino-acid sequence, 343 residues long: Homeobox protein Hox-D13 (343 aa).

2 disordered regions span residues 1-28 (MSRA…SSSS) and 78-115 (GTSE…PAAA). Over residues 85–115 (SSSSSSSSAVVAARPEAPPAKECPAPTPAAA) the composition is skewed to low complexity. Positions 276–335 (GRKKRVPYTKLQLKELENEYAINKFINKDKRRRISAATNLSERQVTIWFQNRRVKDKKIV) form a DNA-binding region, homeobox.

It belongs to the Abd-B homeobox family.

It is found in the nucleus. Its function is as follows. Sequence-specific transcription factor that binds gene promoters and activates their transcription. Part of a developmental regulatory system that provides cells with specific positional identities on the anterior-posterior axis. The polypeptide is Homeobox protein Hox-D13 (HOXD13) (Homo sapiens (Human)).